The following is a 43-amino-acid chain: Protein PsbN (43 aa).

The helical transmembrane segment at 7–27 (IAIFISGLLVSFTGYALYTAF) threads the bilayer.

This sequence belongs to the PsbN family.

The protein localises to the plastid. Its subcellular location is the chloroplast thylakoid membrane. Its function is as follows. May play a role in photosystem I and II biogenesis. In Suaeda maritima (Annual sea blite), this protein is Protein PsbN.